Consider the following 82-residue polypeptide: RNA-binding protein Hfq (82 aa).

A Sm domain is found at 11 to 71 (DTFLNHVRKT…ISTIMPGAPI (61 aa)).

This sequence belongs to the Hfq family. In terms of assembly, homohexamer.

Its function is as follows. RNA chaperone that binds small regulatory RNA (sRNAs) and mRNAs to facilitate mRNA translational regulation in response to envelope stress, environmental stress and changes in metabolite concentrations. Also binds with high specificity to tRNAs. The polypeptide is RNA-binding protein Hfq (Bradyrhizobium diazoefficiens (strain JCM 10833 / BCRC 13528 / IAM 13628 / NBRC 14792 / USDA 110)).